A 69-amino-acid polypeptide reads, in one-letter code: Alpha-conotoxin Mr1.7a (69 aa).

A signal peptide spans 1–21; it reads MGMRMMFTVFLLVVLATTVVS. A propeptide spanning residues 22–49 is cleaved from the precursor; it reads FTSNRVLDPAFRRRNAAAKASDLIALNA. 2 positions are modified to 4-hydroxyproline; in Mr1.7b: Pro-52 and Pro-58. Disulfide bonds link Cys-54–Cys-60 and Cys-55–Cys-68. The lacks the Ser-Xaa-Pro motif that is crucial for potent interaction with nAChR stretch occupies residues 56-58; the sequence is THP. Cys-68 carries the cysteine amide modification.

It belongs to the conotoxin A superfamily. Post-translationally, two 4-hydroxyprolines have been detected by MS but the assignment of which of the three prolines is modified is uncertain. As to expression, expressed by the venom duct.

The protein localises to the secreted. Functionally, acts as a co-agonist with PNU (an alpha-7 nAChR-selective allosteric modulator) at the endogenous alpha-7/CHRNA7 nicotinic acetylcholine receptors (nAChR) when tested in human SH-SY5Y neuroblastoma cells. Is the third alpha-conotoxin that acts as an agonist (after alpha-conotoxin SrIA/SrIB). Also acts as an antagonist at human alpha-7 nAChRs heterologously expressed in Xenopus oocytes. Has possibly a distinct nAChR binding mode from other alpha-conotoxins, due to a different three residue motif (lacks the Ser-Xaa-Pro motif). Acts as a weak partial agonist at alpha-7/CHRNA7 nicotinic acetylcholine receptors (nAChR) when tested in human SH-SY5Y neuroblastoma cells. Has possibly a distinct nAChR binding mode from other alpha-conotoxins, due to a different three residue motif (lacks the Ser-Xaa-Pro motif). The polypeptide is Alpha-conotoxin Mr1.7a (Conus marmoreus (Marble cone)).